The primary structure comprises 794 residues: Phosphoribosylformylglycinamidine synthase subunit PurL (794 aa).

H47 is a catalytic residue. ATP is bound by residues Y50 and K89. E91 contributes to the Mg(2+) binding site. Substrate is bound by residues 92 to 95 and R114; that span reads SHNH. Residue H93 is the Proton acceptor of the active site. Residue D115 coordinates Mg(2+). Substrate is bound at residue Q238. D266 serves as a coordination point for Mg(2+). Position 310–312 (310–312) interacts with substrate; the sequence is ESQ. ATP is bound by residues D522 and G559. N560 lines the Mg(2+) pocket. Residue S562 coordinates substrate.

The protein belongs to the FGAMS family. As to quaternary structure, monomer. Part of the FGAM synthase complex composed of 1 PurL, 1 PurQ and 2 PurS subunits.

It localises to the cytoplasm. It carries out the reaction N(2)-formyl-N(1)-(5-phospho-beta-D-ribosyl)glycinamide + L-glutamine + ATP + H2O = 2-formamido-N(1)-(5-O-phospho-beta-D-ribosyl)acetamidine + L-glutamate + ADP + phosphate + H(+). The protein operates within purine metabolism; IMP biosynthesis via de novo pathway; 5-amino-1-(5-phospho-D-ribosyl)imidazole from N(2)-formyl-N(1)-(5-phospho-D-ribosyl)glycinamide: step 1/2. Its function is as follows. Part of the phosphoribosylformylglycinamidine synthase complex involved in the purines biosynthetic pathway. Catalyzes the ATP-dependent conversion of formylglycinamide ribonucleotide (FGAR) and glutamine to yield formylglycinamidine ribonucleotide (FGAM) and glutamate. The FGAM synthase complex is composed of three subunits. PurQ produces an ammonia molecule by converting glutamine to glutamate. PurL transfers the ammonia molecule to FGAR to form FGAM in an ATP-dependent manner. PurS interacts with PurQ and PurL and is thought to assist in the transfer of the ammonia molecule from PurQ to PurL. In Prochlorococcus marinus (strain MIT 9313), this protein is Phosphoribosylformylglycinamidine synthase subunit PurL.